The chain runs to 918 residues: Probable lipoxygenase 6 (918 aa).

The disordered stretch occupies residues 56 to 76; it reads AASPSSGIKGGGAGERRPAPE. The PLAT domain maps to 90-218; that stretch reads QKEDIKEAVA…ELPTKRVFFS (129 aa). The region spanning 221–918 is the Lipoxygenase domain; the sequence is PYLPSETPPG…CRGVPNSISI (698 aa). Fe cation is bound by residues His-573, His-578, His-765, Asn-769, and Ile-918.

Belongs to the lipoxygenase family. Requires Fe cation as cofactor.

It carries out the reaction (9Z,12Z)-octadecadienoate + O2 = (13S)-hydroperoxy-(9Z,11E)-octadecadienoate. The catalysed reaction is (9Z,12Z,15Z)-octadecatrienoate + O2 = (13S)-hydroperoxy-(9Z,11E,15Z)-octadecatrienoate. The protein operates within lipid metabolism; oxylipin biosynthesis. Plant lipoxygenase may be involved in a number of diverse aspects of plant physiology including growth and development, pest resistance, and senescence or responses to wounding. Catalyzes the hydroperoxidation of lipids containing a cis,cis-1,4-pentadiene structure. This Oryza sativa subsp. japonica (Rice) protein is Probable lipoxygenase 6.